Reading from the N-terminus, the 401-residue chain is 8-amino-7-oxononanoate synthase (401 aa).

A substrate-binding site is contributed by arginine 24. Pyridoxal 5'-phosphate is bound at residue 111 to 112; the sequence is GF. Position 137 (histidine 137) interacts with substrate. 3 residues coordinate pyridoxal 5'-phosphate: serine 183, histidine 211, and threonine 240. N6-(pyridoxal phosphate)lysine is present on lysine 243. Position 357 (threonine 357) interacts with substrate.

Belongs to the class-II pyridoxal-phosphate-dependent aminotransferase family. BioF subfamily. Homodimer. The cofactor is pyridoxal 5'-phosphate.

The catalysed reaction is 6-carboxyhexanoyl-[ACP] + L-alanine + H(+) = (8S)-8-amino-7-oxononanoate + holo-[ACP] + CO2. It participates in cofactor biosynthesis; biotin biosynthesis. In terms of biological role, catalyzes the decarboxylative condensation of pimeloyl-[acyl-carrier protein] and L-alanine to produce 8-amino-7-oxononanoate (AON), [acyl-carrier protein], and carbon dioxide. In Xanthomonas campestris pv. campestris (strain 8004), this protein is 8-amino-7-oxononanoate synthase.